The primary structure comprises 114 residues: Non-specific lipid-transfer protein 2 (114 aa).

The N-terminal stretch at 1–23 is a signal peptide; that stretch reads MEMFGKIACFVVFCMVVVAPHAE. 4 disulfide bridges follow: cysteine 27-cysteine 73, cysteine 37-cysteine 50, cysteine 51-cysteine 96, and cysteine 71-cysteine 110.

Belongs to the plant LTP family.

Functionally, plant non-specific lipid-transfer proteins transfer phospholipids as well as galactolipids across membranes. May play a role in wax or cutin deposition in the cell walls of expanding epidermal cells and certain secretory tissues. The protein is Non-specific lipid-transfer protein 2 (LE16) of Solanum lycopersicum (Tomato).